A 247-amino-acid chain; its full sequence is Peroxisomal membrane protein 11A (247 aa).

The Cytoplasmic portion of the chain corresponds to 1–83 (MDAFTRFTNQ…SIHATDLVPR (83 aa)). Residues 84 to 105 (LCLTLANLNRVIYFICDTILWV) traverse the membrane as a helical segment. The Lumenal portion of the chain corresponds to 106–219 (RSVGLTSGIN…DQLGIYKSNP (114 aa)). Residues 220-239 (GIIGLGGLVSSIAGMITVAY) form a helical membrane-spanning segment. The segment at 220–239 (GIIGLGGLVSSIAGMITVAY) is required for homodimerization, interaction with PEX11G, and peroxisomal localization. Residues 240–247 (PQMKLKTR) are Cytoplasmic-facing.

Belongs to the peroxin-11 family. Homodimer. Heterodimer with PEX11G. Probably interacts with COPB2 and COPA. Interacts with PEX19. Interacts with FIS1. Seems not to be N-glycosylated.

It localises to the peroxisome membrane. Its function is as follows. May be involved in peroxisomal proliferation and may regulate peroxisomes division. May mediate binding of coatomer proteins to the peroxisomal membrane. Promotes membrane protrusion and elongation on the peroxisomal surface. The protein is Peroxisomal membrane protein 11A (PEX11A) of Homo sapiens (Human).